Consider the following 551-residue polypeptide: Cation/acetate symporter ActP (551 aa).

14 helical membrane-spanning segments follow: residues 5-25 (HWSA…ALTG), 34-54 (IQAI…TYWA), 77-97 (GLAI…SALV), 104-124 (GLIY…LIAE), 150-170 (LSAC…MVGA), 184-204 (VAVV…GMLA), 207-227 (WVQI…AIMV), 263-283 (ISAL…PHIL), 304-324 (GFIG…ILLV), 356-376 (FFLG…VAGL), 406-426 (VSKI…ILFE), 430-450 (IAFM…PIII), 469-489 (LGLS…VTIL), and 498-518 (YEYP…FFSI).

This sequence belongs to the sodium:solute symporter (SSF) (TC 2.A.21) family.

It localises to the cell inner membrane. In terms of biological role, transports acetate. This Yersinia pseudotuberculosis serotype IB (strain PB1/+) protein is Cation/acetate symporter ActP.